An 82-amino-acid polypeptide reads, in one-letter code: Small ribosomal subunit protein bS20 (82 aa).

Residues 1–11 are compositionally biased toward basic residues; it reads MANHKSALKRI. Positions 1–20 are disordered; sequence MANHKSALKRIRSNETKRLR.

It belongs to the bacterial ribosomal protein bS20 family.

Functionally, binds directly to 16S ribosomal RNA. In Christiangramia forsetii (strain DSM 17595 / CGMCC 1.15422 / KT0803) (Gramella forsetii), this protein is Small ribosomal subunit protein bS20.